The following is a 1036-amino-acid chain: Nitrogen catabolic enzyme regulatory protein (1036 aa).

Over residues 1-17 (MAASTTTPTATTRPFFT) the composition is skewed to low complexity. Disordered regions lie at residues 1-126 (MAAS…HTQS), 207-240 (TDRT…SQGS), 256-298 (TPAG…QSQH), 318-351 (GYLP…HVSA), 590-743 (SSQG…PTTC), 792-976 (RGSG…PTTQ), and 1000-1028 (GMPN…TGAE). The segment covering 23–34 (TEHDFRFPRRPG) has biased composition (basic and acidic residues). Low complexity predominate over residues 45 to 56 (AAMSSSSANNNH). Repeat copies occupy residues 49–55 (SSSANNN), 87–92 (SSSNNN), and 105–110 (SSSNNN). Residues 49–110 (SSSANNNHNQ…INHQSSSNNN (62 aa)) are 3 X approximate repeats. Low complexity predominate over residues 100-114 (NINHQSSSNNNISKN). The span at 652–661 (PRSQSQSFRQ) shows a compositional bias: polar residues. Residues 703–714 (SSGLSSVPASRP) show a composition bias toward low complexity. Positions 723 to 736 (QGSTTNLQGAAGNS) are enriched in polar residues. A GATA-type zinc finger spans residues 743–767 (CTNCFTQTTPLWRRNPDGQPLCNAC). The span at 802-827 (GTSTRSKKNASMSAAARKNSTLSITS) shows a compositional bias: polar residues. Composition is skewed to low complexity over residues 828-861 (NANN…ASGP) and 868-899 (AGST…SAPP). Residues 927 to 961 (SAGSDQPVSAGAVSSSGMDVDSPANSTGSNETMPT) are compositionally biased toward polar residues. Over residues 1000–1023 (GMPNGQAGQMMGASSSSGPGSGPS) the composition is skewed to low complexity.

Interacts with nmr.

The protein resides in the nucleus. Major nitrogen regulatory protein. During conditions of nitrogen limitation it turns on the expression of genes for enzymes which are required for the use of a variety of secondary nitrogen sources, including nitrates, purines, amino acids, and proteins. The sequence is that of Nitrogen catabolic enzyme regulatory protein (nit-2) from Neurospora crassa (strain ATCC 24698 / 74-OR23-1A / CBS 708.71 / DSM 1257 / FGSC 987).